Here is a 578-residue protein sequence, read N- to C-terminus: Leucine-rich repeat-containing protein 15 (578 aa).

The signal sequence occupies residues 1–21 (MPLKHYLLLLVGCQAWALGLA). The LRRNT domain occupies 22–53 (YYGCPSECTCSRASQVECTGARIVAMPTPLPW). Topologically, residues 22-535 (YYGCPSECTC…TWGMTEAQSG (514 aa)) are extracellular. LRR repeat units lie at residues 54-75 (NAMS…LFLN), 78-99 (ALIA…AFRN), 102-123 (SLRY…VFQD), 126-147 (NLES…QFSQ), 150-171 (NLRE…AFDH), 174-195 (GLTK…LFQH), 198-219 (NLQV…TFDA), 222-243 (NLQE…LFHN), 246-267 (NLQR…IFMQ), 270-291 (QLNK…VFGP), 294-315 (NLRE…TFSH), 318-339 (QLQV…AFNG), 342-363 (NLRE…VFRS), 366-387 (NLQN…IFAN), and 390-411 (GLTT…IFDH). Asn-75 carries an N-linked (GlcNAc...) asparagine glycan. The N-linked (GlcNAc...) asparagine glycan is linked to Asn-369. The LRRCT domain occupies 423–473 (NPWRCDSDILPLHNWLLLNRARLGTDTLPVCSSPANVRGQSLVIININFPG). A disordered region spans residues 476-500 (VQGPETPEVPSYPDTPSYPDTTSVS). Residues 536–556 (LAIAAIVIGIIALACSLAACI) traverse the membrane as a helical segment. Topologically, residues 557–578 (CCCCCKKRSQAVLMQMKAPNEC) are cytoplasmic.

It localises to the cell membrane. This is Leucine-rich repeat-containing protein 15 (Lrrc15) from Rattus norvegicus (Rat).